Reading from the N-terminus, the 162-residue chain is Regulatory protein RecX (162 aa).

The protein belongs to the RecX family.

The protein resides in the cytoplasm. In terms of biological role, modulates RecA activity. The chain is Regulatory protein RecX from Xanthomonas axonopodis pv. citri (strain 306).